A 160-amino-acid chain; its full sequence is Nucleotide-binding protein Tgr7_1196 (160 aa).

Belongs to the YajQ family.

Nucleotide-binding protein. The polypeptide is Nucleotide-binding protein Tgr7_1196 (Thioalkalivibrio sulfidiphilus (strain HL-EbGR7)).